The sequence spans 208 residues: Large ribosomal subunit protein uL3 (208 aa).

N5-methylglutamine is present on Gln149.

Belongs to the universal ribosomal protein uL3 family. As to quaternary structure, part of the 50S ribosomal subunit. Forms a cluster with proteins L14 and L19. Methylated by PrmB.

Its function is as follows. One of the primary rRNA binding proteins, it binds directly near the 3'-end of the 23S rRNA, where it nucleates assembly of the 50S subunit. This is Large ribosomal subunit protein uL3 from Histophilus somni (strain 129Pt) (Haemophilus somnus).